Reading from the N-terminus, the 379-residue chain is MTNIRKTHPLMKIINNSLIDLPAPSNISSLWNFGSLLGACLTIQIITGLFLAMHYTADTTTAFSSVTHICRDVNYGWTIRYLHANGASLFFLCLFIHVGRGLYYGSFVLLETWNIGIMLLFSVMATAFMGYVLPWGQMSFWGATVITNLLSAIPYVGTDLVEWIWGGFSVSKPTLTRFFALHFILPFIISALTMIHLLFLHETGSNNPLGMSSNPDKIPFHPYYTTKDFLGLLLLILLLMTLTLFYPDLLGDPDNYTPANPLNTPPHIKPEWYFLFAYAILRSIPNKLGGVVALIMSILILAIMPFLQPNKQQTMMFRPLSQFLFWILVADLLTLTWIGGQPVENPFINIGQMASILYFSLMVFIMPMTCLVENKMLKW.

The next 4 membrane-spanning stretches (helical) occupy residues 33-53, 77-98, 113-133, and 178-198; these read FGSL…FLAM, WTIR…FIHV, WNIG…GYVL, and FFAL…IHLL. Residues His-83 and His-97 each coordinate heme b. Heme b is bound by residues His-182 and His-196. Position 201 (His-201) interacts with a ubiquinone. 4 consecutive transmembrane segments (helical) span residues 226–246, 288–308, 320–340, and 347–367; these read TKDF…TLFY, LGGV…PFLQ, LSQF…WIGG, and FINI…FIMP.

The protein belongs to the cytochrome b family. In terms of assembly, the cytochrome bc1 complex contains 11 subunits: 3 respiratory subunits (MT-CYB, CYC1 and UQCRFS1), 2 core proteins (UQCRC1 and UQCRC2) and 6 low-molecular weight proteins (UQCRH/QCR6, UQCRB/QCR7, UQCRQ/QCR8, UQCR10/QCR9, UQCR11/QCR10 and a cleavage product of UQCRFS1). This cytochrome bc1 complex then forms a dimer. The cofactor is heme b.

The protein resides in the mitochondrion inner membrane. Component of the ubiquinol-cytochrome c reductase complex (complex III or cytochrome b-c1 complex) that is part of the mitochondrial respiratory chain. The b-c1 complex mediates electron transfer from ubiquinol to cytochrome c. Contributes to the generation of a proton gradient across the mitochondrial membrane that is then used for ATP synthesis. The chain is Cytochrome b (MT-CYB) from Lepilemur aeeclis (Sportive lemur).